The primary structure comprises 224 residues: MDGTPGHDDMPGQPAPSRGESLWAHAEGSISEDVILAGARERATDIGAGAVTPAVGALLCLLAKLSGGKAVAEVGTGAGVSGLWLLSGMRDDGVLTTIDIEPEHLRLARQAFAEAGIGPSRTRLISGRAQEVLTRLADASYDLVFIDADPIDQPDYVAEGVRLLRSGGVIVVHRAALGGRAGDPGARDAEVIAVREAARLIAEDERLTPALVPLGDGVLAAVRD.

Positions 1–10 (MDGTPGHDDM) are enriched in basic and acidic residues. The interval 1–21 (MDGTPGHDDMPGQPAPSRGES) is disordered. Residues Val-51, Glu-73, 75–76 (GT), Ser-81, Asp-99, and Ile-100 each bind S-adenosyl-L-methionine. Asp-147 contacts substrate. Asp-149 lines the S-adenosyl-L-methionine pocket.

Belongs to the class I-like SAM-binding methyltransferase superfamily. Cation-dependent O-methyltransferase family.

The sequence is that of Putative O-methyltransferase MT1258 from Mycobacterium tuberculosis (strain CDC 1551 / Oshkosh).